The following is a 397-amino-acid chain: FAD-dependent monooxygenase trt8 (397 aa).

The active site involves Y53. FAD is bound by residues D145 and A158.

It belongs to the paxM FAD-dependent monooxygenase family. The cofactor is FAD.

It functions in the pathway secondary metabolite biosynthesis; terpenoid biosynthesis. In terms of biological role, FAD-dependent monooxygenase; part of the gene cluster that mediates the biosynthesis of terretonin, a fungal meroterpenoid that acts as a mycotoxin. The first step of the pathway is the synthesis of 3,5-dimethylorsellinic acid (DMOA) by the polyketide synthase trt4. DMOA is then prenylated into farnesyl-DMOA by the polyprenyl transferase trt2. Methylation by the methyltransferase trt5 then leads to farnesyl-DMOA methyl ester which is further subject to epoxidation by the FAD-dependent monooxygenase trt8 to yield epoxyfarnesyl-DMOA methyl ester. Cyclization of epoxyfarnesyl-DMOA methyl ester by the terpene cyclase trt1 leads to a tetracycle intermediate which is in turn converted to preterretonin. Dehydrogenase trt9 comes next to transform preterretonin to preterrenoid. The FAD-dependent monooxygenase trt3 is then required for the C-hydroxylation at C16 of preterrenoid to yield terrenoid. The cytochrome P450 trt6 catalyzes three successive oxidations to transform terrenoid into an unstable intermediate, which then undergoes the D-ring expansion and unusual rearrangement of the methoxy group to afford the core skeleton of terretonin. Trt14 catalyzes the D-ring expansion of terretonin involving intramolecular methoxy rearrangement as well as the hydrolysis of the expanded D-ring and the methyl ester moiety. Finally, the nonheme iron-dependent dioxygenase trt7 accomplishes the last two oxidation reactions steps to complete the biosynthesis of terretonin. Terretonin C is produced via spontaneous decarboxylation of the terretonin precursor. Another shunt product of the terretonin biosynthesis is dihydrofarnesyl-DMOA, derived from epoxyfarnesyl-DMOA through hydrolysis of the epoxide. In Aspergillus terreus (strain NIH 2624 / FGSC A1156), this protein is FAD-dependent monooxygenase trt8.